A 356-amino-acid polypeptide reads, in one-letter code: Arginine kinase (356 aa).

The 83-residue stretch at 9–91 (KLEAGFQKLQ…FDPIIEDYHI (83 aa)) folds into the Phosphagen kinase N-terminal domain. 64–68 (GVGIY) is a binding site for L-arginine. A Phosphagen kinase C-terminal domain is found at 119 to 356 (FVISTRVRCG…AELIKLEQSA (238 aa)). ATP is bound by residues 122–126 (STRVR) and histidine 185. Residue glutamate 225 coordinates L-arginine. Arginine 229 lines the ATP pocket. Cysteine 271 is a binding site for L-arginine. Residues 280–284 (RASVH) and 309–314 (RGTRGE) contribute to the ATP site. L-arginine is bound at residue glutamate 314.

The protein belongs to the ATP:guanido phosphotransferase family.

The catalysed reaction is L-arginine + ATP = N(omega)-phospho-L-arginine + ADP + H(+). This is Arginine kinase (ARGK) from Artemia franciscana (Brine shrimp).